The primary structure comprises 804 residues: Elongation factor G, mitochondrial (804 aa).

A mitochondrion-targeting transit peptide spans 1 to 63 (MSMHRVARAV…RHFSQSPIIR (63 aa)). One can recognise a tr-type G domain in the interval 99 to 385 (RRVRNIGIAA…AVCDYLPNPA (287 aa)). GTP contacts are provided by residues 108-115 (AHIDSGKT), 183-187 (DTPGH), and 237-240 (NKMD).

This sequence belongs to the TRAFAC class translation factor GTPase superfamily. Classic translation factor GTPase family. EF-G/EF-2 subfamily.

Its subcellular location is the mitochondrion. It participates in protein biosynthesis; polypeptide chain elongation. In terms of biological role, mitochondrial GTPase that catalyzes the GTP-dependent ribosomal translocation step during translation elongation. During this step, the ribosome changes from the pre-translocational (PRE) to the post-translocational (POST) state as the newly formed A-site-bound peptidyl-tRNA and P-site-bound deacylated tRNA move to the P and E sites, respectively. Catalyzes the coordinated movement of the two tRNA molecules, the mRNA and conformational changes in the ribosome. This is Elongation factor G, mitochondrial (mef1) from Botryotinia fuckeliana (strain B05.10) (Noble rot fungus).